Here is a 201-residue protein sequence, read N- to C-terminus: L(+)-tartrate dehydratase subunit beta (201 aa).

Residue H37 is part of the active site.

It belongs to the class-I fumarase family. In terms of assembly, heterotetramer of two alpha and two beta subunits.

The enzyme catalyses (2R,3R)-tartrate = oxaloacetate + H2O. In Shigella sonnei (strain Ss046), this protein is L(+)-tartrate dehydratase subunit beta (ttdB).